The following is a 182-amino-acid chain: Ferredoxin-thioredoxin reductase subunit A1, chloroplastic (182 aa).

The N-terminal 81 residues, 1-81 (MSSQIALSPA…VAIKSADSIN (81 aa)), are a transit peptide targeting the chloroplast.

It belongs to the ferredoxin thioredoxin reductase alpha subunit family. As to quaternary structure, heterodimer of subunit A (variable subunit) and subunit B (catalytic subunit). Heterodimeric FTR forms a complex with ferredoxin and thioredoxin.

Its subcellular location is the plastid. The protein localises to the chloroplast. Functionally, variable subunit of the ferredoxin-thioredoxin reductase (FTR), which catalyzes the two-electron reduction of thioredoxins by the electrons provided by reduced ferredoxin. The polypeptide is Ferredoxin-thioredoxin reductase subunit A1, chloroplastic (Arabidopsis thaliana (Mouse-ear cress)).